We begin with the raw amino-acid sequence, 395 residues long: Elongation factor Tu (395 aa).

A tr-type G domain is found at 10–205 (KVHMNVGTIG…TMDEYFKDPV (196 aa)). Residues 19-26 (GHVDHGKT) are G1. 19 to 26 (GHVDHGKT) contacts GTP. T26 contacts Mg(2+). Positions 60–64 (GITIN) are G2. The G3 stretch occupies residues 81–84 (DCPG). Residues 81–85 (DCPGH) and 136–139 (NKVD) contribute to the GTP site. Residues 136 to 139 (NKVD) are G4. Residues 173–175 (SAF) are G5.

This sequence belongs to the TRAFAC class translation factor GTPase superfamily. Classic translation factor GTPase family. EF-Tu/EF-1A subfamily. In terms of assembly, monomer.

Its subcellular location is the cytoplasm. The catalysed reaction is GTP + H2O = GDP + phosphate + H(+). GTP hydrolase that promotes the GTP-dependent binding of aminoacyl-tRNA to the A-site of ribosomes during protein biosynthesis. The protein is Elongation factor Tu of Treponema denticola (strain ATCC 35405 / DSM 14222 / CIP 103919 / JCM 8153 / KCTC 15104).